The sequence spans 206 residues: Isopentenyl-diphosphate Delta-isomerase (206 aa).

Positions 44 and 51 each coordinate Mn(2+). One can recognise a Nudix hydrolase domain in the interval 49–183 (ALHLAFSCHV…PWAFSPWLVL (135 aa)). The active site involves Cys86. Residue Cys86 participates in Mg(2+) binding. His88 is a Mn(2+) binding site. Glu106 contributes to the Mg(2+) binding site. The Mn(2+) site is built by Glu133 and Glu135. Glu135 is an active-site residue.

Belongs to the IPP isomerase type 1 family. The cofactor is Mg(2+). Requires Mn(2+) as cofactor.

It localises to the cytoplasm. The enzyme catalyses isopentenyl diphosphate = dimethylallyl diphosphate. The protein operates within isoprenoid biosynthesis; dimethylallyl diphosphate biosynthesis; dimethylallyl diphosphate from isopentenyl diphosphate: step 1/1. Its function is as follows. Catalyzes the 1,3-allylic rearrangement of the homoallylic substrate isopentenyl (IPP) to its highly electrophilic allylic isomer, dimethylallyl diphosphate (DMAPP). In Agromyces mediolanus (Corynebacterium mediolanum), this protein is Isopentenyl-diphosphate Delta-isomerase.